The primary structure comprises 451 residues: Interferon-related developmental regulator 1 (451 aa).

Residues 1 to 10 (MPKNKKRNTP) show a composition bias toward basic residues. The segment at 1 to 69 (MPKNKKRNTP…PSSFAEDGPE (69 aa)) is disordered. The span at 23–33 (AAAATAATAGG) shows a compositional bias: low complexity. Polar residues predominate over residues 49 to 61 (ETMSHCSGYSDPS).

Belongs to the IFRD family. As to quaternary structure, interacts with PSIP1/LEDGF. As to expression, expressed in a variety of tissues.

Functionally, could play a role in regulating gene activity in the proliferative and/or differentiative pathways induced by NGF. May be an autocrine factor that attenuates or amplifies the initial ligand-induced signal. This is Interferon-related developmental regulator 1 (IFRD1) from Homo sapiens (Human).